The following is a 606-amino-acid chain: Mitogen-activated protein kinase 20 (606 aa).

One can recognise a Protein kinase domain in the interval 25 to 316 (FKVQEVIGKG…AEEALADPYF (292 aa)). Residues 31-39 (IGKGSYGVV) and lysine 54 contribute to the ATP site. Residue aspartate 151 is the Proton acceptor of the active site. Threonine 187 carries the phosphothreonine modification. A TXY motif is present at residues 187–189 (TDY). Tyrosine 189 bears the Phosphotyrosine mark. Threonine 192 is subject to Phosphothreonine.

Belongs to the protein kinase superfamily. CMGC Ser/Thr protein kinase family. MAP kinase subfamily. In terms of processing, dually phosphorylated on Thr-187 and Tyr-189, which activates the enzyme.

It carries out the reaction L-seryl-[protein] + ATP = O-phospho-L-seryl-[protein] + ADP + H(+). It catalyses the reaction L-threonyl-[protein] + ATP = O-phospho-L-threonyl-[protein] + ADP + H(+). Its activity is regulated as follows. Activated by threonine and tyrosine phosphorylation. This is Mitogen-activated protein kinase 20 (MPK20) from Arabidopsis thaliana (Mouse-ear cress).